We begin with the raw amino-acid sequence, 168 residues long: Protein B-Myc (168 aa).

Disordered regions lie at residues Asp-26–Glu-94 and Glu-146–Thr-168. A phosphoserine mark is found at Ser-59 and Ser-67.

Its subcellular location is the nucleus. In terms of biological role, seems to act as an inhibitor of cellular proliferation. This chain is Protein B-Myc (Mycb), found in Rattus norvegicus (Rat).